We begin with the raw amino-acid sequence, 417 residues long: Glutamyl-tRNA(Gln) amidotransferase subunit D (417 aa).

The Asparaginase/glutaminase domain maps to 73–400 (EKVWLLATGG…EEVPRVLTTP (328 aa)). Catalysis depends on residues T83, T157, D158, and K236.

Belongs to the asparaginase 1 family. GatD subfamily. As to quaternary structure, heterodimer of GatD and GatE.

The catalysed reaction is L-glutamyl-tRNA(Gln) + L-glutamine + ATP + H2O = L-glutaminyl-tRNA(Gln) + L-glutamate + ADP + phosphate + H(+). Functionally, allows the formation of correctly charged Gln-tRNA(Gln) through the transamidation of misacylated Glu-tRNA(Gln) in organisms which lack glutaminyl-tRNA synthetase. The reaction takes place in the presence of glutamine and ATP through an activated gamma-phospho-Glu-tRNA(Gln). The GatDE system is specific for glutamate and does not act on aspartate. In Pyrobaculum aerophilum (strain ATCC 51768 / DSM 7523 / JCM 9630 / CIP 104966 / NBRC 100827 / IM2), this protein is Glutamyl-tRNA(Gln) amidotransferase subunit D.